A 213-amino-acid chain; its full sequence is Large ribosomal subunit protein uL1 (213 aa).

It belongs to the universal ribosomal protein uL1 family. In terms of assembly, part of the 50S ribosomal subunit.

Its function is as follows. Binds directly to 23S rRNA. Probably involved in E site tRNA release. Functionally, protein L1 is also a translational repressor protein, it controls the translation of its operon by binding to its mRNA. The chain is Large ribosomal subunit protein uL1 from Methanococcoides burtonii (strain DSM 6242 / NBRC 107633 / OCM 468 / ACE-M).